A 258-amino-acid chain; its full sequence is Synapse differentiation-inducing gene protein 1 (258 aa).

Over 1-181 (MDGIIEQKSV…NFLMMPPRDH (181 aa)) the chain is Cytoplasmic. Ser137 is modified (phosphoserine). The helical transmembrane segment at 182-202 (LGLSVFSMLCCFWPLGIAAFY) threads the bilayer. Over 203–228 (LSHETNKAVAKGDFHQASTSSRRALF) the chain is Extracellular. Residues 229-249 (LAVLSITIGTGIYVGVAVALI) constitute an intramembrane region (helical). At 250–258 (AYLSKNNHL) the chain is on the extracellular side.

The protein belongs to the CD225/Dispanin family. As to quaternary structure, homodimer. Interacts with GRIA1 and GRIA2. Brain-specific. Expressed in Purkinje neurons in cerebellum. Also detected in the hippocampus. Found at excitatory synapses and postsynaptic cells.

Its subcellular location is the cell membrane. The protein resides in the early endosome membrane. It is found in the postsynaptic density membrane. It localises to the synapse. The protein localises to the cell projection. Its subcellular location is the dendrite. The protein resides in the dendritic spine. In terms of biological role, may regulate AMPA receptor content at nascent synapses, and have a role in postsynaptic development and maturation. The chain is Synapse differentiation-inducing gene protein 1 (Syndig1) from Mus musculus (Mouse).